The chain runs to 383 residues: Cytochrome b (383 aa).

Helical transmembrane passes span 35–55 (FGSI…ILSM), 79–100 (WLFR…YIHI), 115–135 (WGIG…GYVL), and 180–200 (FFSL…LHLF). 2 residues coordinate heme b: His85 and His99. His184 and His198 together coordinate heme b. Residue His203 coordinates a ubiquinone. Helical transmembrane passes span 228–248 (IKDL…NFQF), 290–310 (LGGV…IFYN), 321–341 (LNKI…WLGK), and 348–368 (FTNI…LNFY).

Belongs to the cytochrome b family. In terms of assembly, the main subunits of complex b-c1 are: cytochrome b, cytochrome c1 and the Rieske protein. Heme b is required as a cofactor.

Its subcellular location is the mitochondrion inner membrane. In terms of biological role, component of the ubiquinol-cytochrome c reductase complex (complex III or cytochrome b-c1 complex) that is part of the mitochondrial respiratory chain. The b-c1 complex mediates electron transfer from ubiquinol to cytochrome c. Contributes to the generation of a proton gradient across the mitochondrial membrane that is then used for ATP synthesis. This Apis mellifera ligustica (Common honeybee) protein is Cytochrome b (MT-CYB).